A 238-amino-acid polypeptide reads, in one-letter code: Probable transcriptional regulatory protein VIBHAR_07036 (238 aa).

Belongs to the TACO1 family.

The protein localises to the cytoplasm. In Vibrio campbellii (strain ATCC BAA-1116), this protein is Probable transcriptional regulatory protein VIBHAR_07036.